The chain runs to 138 residues: MQLPPFDMWKDYFNLSQVVWALIASRGQRLETQEIEEPSPGPPLGQDQGLGAPGANGGLGTLCNFCKHNGESRHVYSSHQLKTPDGVVVCPILRHYVCPVCGATGDQAHTLKYCPLNGGQQSLYRRSGRNSAGRRVKR.

The tract at residues E31–A55 is disordered. A Nanos-type zinc finger spans residues L62 to L116. 8 residues coordinate Zn(2+): C63, C66, H79, C90, C98, C101, H109, and C114. 2 short sequence motifs (C2HC) span residues C63–C90 and C98–C114.

It belongs to the nanos family. As to quaternary structure, interacts with CNOT1, CNOT3, CNOT6L, CNOT7 and CNOT9. As to expression, testis and ovary. Expression found in several spermatogenic stages: in cells on the periphery of the tubules which could correspond to spermatogonia, in spermatocytes and in round spermatids (at protein level).

The protein resides in the cytoplasm. The protein localises to the P-body. Its subcellular location is the perinuclear region. Plays a key role in the sexual differentiation of germ cells by promoting the male fate but suppressing the female fate. Represses the female fate pathways by suppressing meiosis, which in turn results in the promotion of the male fate. Maintains the suppression of meiosis by preventing STRA8 expression, which is required for premeiotic DNA replication, after CYP26B1 is decreased. Regulates the localization of the CCR4-NOT deadenylation complex to P-bodies and plays a role in recruiting the complex to trigger the degradation of mRNAs involved in meiosis. Required for the maintenance of the spermatogonial stem cell population. Not essential for the assembly of P-bodies but is required for the maintenance of their normal state. This chain is Nanos homolog 2 (NANOS2), found in Homo sapiens (Human).